Here is a 481-residue protein sequence, read N- to C-terminus: Aspartyl/glutamyl-tRNA(Asn/Gln) amidotransferase subunit B (481 aa).

Belongs to the GatB/GatE family. GatB subfamily. Heterotrimer of A, B and C subunits.

The enzyme catalyses L-glutamyl-tRNA(Gln) + L-glutamine + ATP + H2O = L-glutaminyl-tRNA(Gln) + L-glutamate + ADP + phosphate + H(+). It catalyses the reaction L-aspartyl-tRNA(Asn) + L-glutamine + ATP + H2O = L-asparaginyl-tRNA(Asn) + L-glutamate + ADP + phosphate + 2 H(+). Functionally, allows the formation of correctly charged Asn-tRNA(Asn) or Gln-tRNA(Gln) through the transamidation of misacylated Asp-tRNA(Asn) or Glu-tRNA(Gln) in organisms which lack either or both of asparaginyl-tRNA or glutaminyl-tRNA synthetases. The reaction takes place in the presence of glutamine and ATP through an activated phospho-Asp-tRNA(Asn) or phospho-Glu-tRNA(Gln). The sequence is that of Aspartyl/glutamyl-tRNA(Asn/Gln) amidotransferase subunit B from Pseudomonas putida (strain ATCC 47054 / DSM 6125 / CFBP 8728 / NCIMB 11950 / KT2440).